We begin with the raw amino-acid sequence, 404 residues long: Cysteine desulfurase IscS (404 aa).

Pyridoxal 5'-phosphate-binding positions include 75–76, Asn155, Gln183, and 203–205; these read AT and SAH. An N6-(pyridoxal phosphate)lysine modification is found at Lys206. Pyridoxal 5'-phosphate is bound at residue Thr243. The active-site Cysteine persulfide intermediate is the Cys328. Cys328 lines the [2Fe-2S] cluster pocket.

Belongs to the class-V pyridoxal-phosphate-dependent aminotransferase family. NifS/IscS subfamily. Homodimer. Forms a heterotetramer with IscU, interacts with other sulfur acceptors. The cofactor is pyridoxal 5'-phosphate.

Its subcellular location is the cytoplasm. The catalysed reaction is (sulfur carrier)-H + L-cysteine = (sulfur carrier)-SH + L-alanine. It participates in cofactor biosynthesis; iron-sulfur cluster biosynthesis. Functionally, master enzyme that delivers sulfur to a number of partners involved in Fe-S cluster assembly, tRNA modification or cofactor biosynthesis. Catalyzes the removal of elemental sulfur atoms from cysteine to produce alanine. Functions as a sulfur delivery protein for Fe-S cluster synthesis onto IscU, an Fe-S scaffold assembly protein, as well as other S acceptor proteins. This chain is Cysteine desulfurase IscS, found in Ruthia magnifica subsp. Calyptogena magnifica.